We begin with the raw amino-acid sequence, 219 residues long: Probable nicotinate-nucleotide adenylyltransferase (219 aa).

Belongs to the NadD family.

The enzyme catalyses nicotinate beta-D-ribonucleotide + ATP + H(+) = deamido-NAD(+) + diphosphate. It functions in the pathway cofactor biosynthesis; NAD(+) biosynthesis; deamido-NAD(+) from nicotinate D-ribonucleotide: step 1/1. Catalyzes the reversible adenylation of nicotinate mononucleotide (NaMN) to nicotinic acid adenine dinucleotide (NaAD). The sequence is that of Probable nicotinate-nucleotide adenylyltransferase from Hahella chejuensis (strain KCTC 2396).